A 101-amino-acid polypeptide reads, in one-letter code: MSKLSKIVKNEKRKVIVARYAARRQELKRIIAAPGTAPERRDEAQAALQKLPRDASPVRVRSRDVVDGRPRGILSRFGVSRIRFREMAHRGELPGITKSSW.

This sequence belongs to the universal ribosomal protein uS14 family. Part of the 30S ribosomal subunit. Contacts proteins S3 and S10.

Its function is as follows. Binds 16S rRNA, required for the assembly of 30S particles and may also be responsible for determining the conformation of the 16S rRNA at the A site. The chain is Small ribosomal subunit protein uS14 from Tropheryma whipplei (strain TW08/27) (Whipple's bacillus).